The chain runs to 260 residues: Thiazole synthase (260 aa).

The active-site Schiff-base intermediate with DXP is Lys-96. 1-deoxy-D-xylulose 5-phosphate-binding positions include Gly-157, 184–185 (AG), and 206–207 (NT).

This sequence belongs to the ThiG family. Homotetramer. Forms heterodimers with either ThiH or ThiS.

It localises to the cytoplasm. The catalysed reaction is [ThiS sulfur-carrier protein]-C-terminal-Gly-aminoethanethioate + 2-iminoacetate + 1-deoxy-D-xylulose 5-phosphate = [ThiS sulfur-carrier protein]-C-terminal Gly-Gly + 2-[(2R,5Z)-2-carboxy-4-methylthiazol-5(2H)-ylidene]ethyl phosphate + 2 H2O + H(+). It participates in cofactor biosynthesis; thiamine diphosphate biosynthesis. Its function is as follows. Catalyzes the rearrangement of 1-deoxy-D-xylulose 5-phosphate (DXP) to produce the thiazole phosphate moiety of thiamine. Sulfur is provided by the thiocarboxylate moiety of the carrier protein ThiS. In vitro, sulfur can be provided by H(2)S. This is Thiazole synthase from Rhodopseudomonas palustris (strain BisB18).